Reading from the N-terminus, the 77-residue chain is Putative regulatory protein tsl2331 (77 aa).

It belongs to the RemA family.

The chain is Putative regulatory protein tsl2331 from Thermosynechococcus vestitus (strain NIES-2133 / IAM M-273 / BP-1).